A 211-amino-acid chain; its full sequence is MFVLASASKARQKLLDQIALRHKVIVSDFDETQLQEPDPILKVKLLAKGKADSALKKLIEENHALNTYQALLGCDSLFEFKGEIFEKPINKEQLISRWKRMSGQSGFLHTGHYLISLDNSKSDMESISQNNSCEGVVSTKIEFMNLSNFEINKYASTSEPYNCAGGFAIEGNGGLFIKKIDGCFSNVIGLSLPWLKNNLEKYGLSRLLLDR.

The active-site Proton acceptor is the Asp75.

Belongs to the Maf family. A divalent metal cation serves as cofactor.

The protein localises to the cytoplasm. It catalyses the reaction a ribonucleoside 5'-triphosphate + H2O = a ribonucleoside 5'-phosphate + diphosphate + H(+). It carries out the reaction a 2'-deoxyribonucleoside 5'-triphosphate + H2O = a 2'-deoxyribonucleoside 5'-phosphate + diphosphate + H(+). Nucleoside triphosphate pyrophosphatase. May have a dual role in cell division arrest and in preventing the incorporation of modified nucleotides into cellular nucleic acids. The chain is Nucleoside triphosphate pyrophosphatase from Prochlorococcus marinus (strain NATL1A).